Here is a 393-residue protein sequence, read N- to C-terminus: MTWKTLDDMALDGKIVLTRVDINVPVADGVVTDTTRIERIVPTVTDILAKGGLPVLLAHFGRPKGKVVPEMSLRVVLPALEEALGRPVEFIAHPDRAALEALPKCTVVLAENTRFAPGEEKNDPEMAAALAALGDIYCNDAFSAAHRAHASTEGIARLLPSCAGRLMQAELEALQRALGTPTRPVVAVVGGAKVSTKLALLGNLVEKVDDLVIGGGMANTFLAAQGIDVGASLAEHEMADTAREIMEKAARAGCSIHLPKDIVVARKFEAGAPSQTLPVSECPRDAMILDAGPETVAALKEVFAQARTLIWNGPLGAFEIPPFDMATNAAARAAADATKAGTLITVAGGGDTVAALNKAGVADDFTYISTAGGAFLEWMEGKTLPGVAALEAA.

Residues 21-23 (DIN), arginine 36, 59-62 (HFGR), arginine 114, and arginine 147 each bind substrate. ATP contacts are provided by residues lysine 197, glutamate 319, and 349–352 (GGDT).

It belongs to the phosphoglycerate kinase family. Monomer.

The protein resides in the cytoplasm. The catalysed reaction is (2R)-3-phosphoglycerate + ATP = (2R)-3-phospho-glyceroyl phosphate + ADP. Its pathway is carbohydrate degradation; glycolysis; pyruvate from D-glyceraldehyde 3-phosphate: step 2/5. The polypeptide is Phosphoglycerate kinase (Dinoroseobacter shibae (strain DSM 16493 / NCIMB 14021 / DFL 12)).